A 257-amino-acid chain; its full sequence is MLLTLAGGALFFPGLFALCTWALRRSQPGWSRTDCVMISTRLVSSVHAVLATGSGIVIIRSCDDVITGRHWLAREYVWFLIPYMIYDSYAMYLCEWCRTRDQNRAPSLTLRNFLSRNRLMITHHAVILFVLVPVAQRLRGDLGDFFVGCIFTAELSTPFVSLGRVLIQLKQQHTLLYKVNGILTLATFLSCRILLFPFMYWSYGRQQGLSLLQVPFSIPFYCNVANAFLVAPQIYWFCLLCRKAVRLFDTPQAKKDG.

7 consecutive transmembrane segments (helical) span residues 1–21 (MLLTLAGGALFFPGLFALCTW), 42–62 (LVSSVHAVLATGSGIVIIRSC), 77–97 (VWFLIPYMIYDSYAMYLCEWC), 113–135 (FLSRNRLMITHHAVILFVLVPVA), 142–162 (LGDFFVGCIFTAELSTPFVSL), 181–201 (GILTLATFLSCRILLFPFMYW), and 220–240 (FYCNVANAFLVAPQIYWFCLL). One can recognise a TLC domain in the interval 33–249 (TDCVMISTRL…LCRKAVRLFD (217 aa)).

Interacts with GGT7 isoform 3 and SLC3A2. Highly expressed in pancreas. Detected at intermediate levels in heart, placenta and kidney, and at low levels in brain, liver and skeletal muscle. Not detected in normal lung.

It localises to the cell membrane. The sequence is that of TLC domain-containing protein 3A from Homo sapiens (Human).